A 69-amino-acid chain; its full sequence is Protein transport protein Sec61 subunit gamma (69 aa).

Residues 1-32 (MDAVDSVVDPLREFAKDSVRLVKRCHKPDRKE) lie on the Cytoplasmic side of the membrane. The chain crosses the membrane as a helical span at residues 33–61 (FTKVAARTAIGFVVMGFVGFFVKLIFIPI). The Extracellular segment spans residues 62 to 69 (NNIIVGSG).

It belongs to the SecE/SEC61-gamma family. Heterotrimeric complex composed of SEC61-alpha, SEC61-beta and SEC61-gamma.

It localises to the endoplasmic reticulum membrane. Necessary for protein translocation in the endoplasmic reticulum. The sequence is that of Protein transport protein Sec61 subunit gamma from Oryza sativa subsp. japonica (Rice).